Reading from the N-terminus, the 436-residue chain is Methylenetetrahydrofolate--tRNA-(uracil-5-)-methyltransferase TrmFO (436 aa).

9-14 (GAGLAG) is a binding site for FAD.

Belongs to the MnmG family. TrmFO subfamily. It depends on FAD as a cofactor.

Its subcellular location is the cytoplasm. It carries out the reaction uridine(54) in tRNA + (6R)-5,10-methylene-5,6,7,8-tetrahydrofolate + NADH + H(+) = 5-methyluridine(54) in tRNA + (6S)-5,6,7,8-tetrahydrofolate + NAD(+). The catalysed reaction is uridine(54) in tRNA + (6R)-5,10-methylene-5,6,7,8-tetrahydrofolate + NADPH + H(+) = 5-methyluridine(54) in tRNA + (6S)-5,6,7,8-tetrahydrofolate + NADP(+). In terms of biological role, catalyzes the folate-dependent formation of 5-methyl-uridine at position 54 (M-5-U54) in all tRNAs. The sequence is that of Methylenetetrahydrofolate--tRNA-(uracil-5-)-methyltransferase TrmFO from Ligilactobacillus salivarius (strain UCC118) (Lactobacillus salivarius).